The chain runs to 115 residues: Putative ethidium bromide resistance protein (115 aa).

Helical transmembrane passes span 4 to 21, 30 to 47, 58 to 79, and 85 to 104; these read WLFL…TSAL, LAPS…FYFL, VAYA…WLLH, and AWGF…ARSP.

It belongs to the drug/metabolite transporter (DMT) superfamily. Small multidrug resistance (SMR) (TC 2.A.7.1) family.

The protein resides in the cell membrane. Functionally, one of the determinants for resistance to ethidium bromide and quaternary ammonium compounds. The protein is Putative ethidium bromide resistance protein (ebr) of Escherichia coli.